Here is a 239-residue protein sequence, read N- to C-terminus: Serine protease SplF (239 aa).

Residues 1-36 (MNKNIIIKSIAALTILTSITGVGTTMVEGIQQTAKA) form the signal peptide. Active-site charge relay system residues include histidine 75, aspartate 114, and serine 192.

The protein belongs to the peptidase S1B family.

It localises to the secreted. This chain is Serine protease SplF (splF), found in Staphylococcus aureus (strain NCTC 8325 / PS 47).